A 72-amino-acid polypeptide reads, in one-letter code: Translation initiation factor IF-1 (72 aa).

In terms of domain architecture, S1-like spans 1 to 72 (MSKEDVIEMQ…TRGRITWRAK (72 aa)).

This sequence belongs to the IF-1 family. Component of the 30S ribosomal translation pre-initiation complex which assembles on the 30S ribosome in the order IF-2 and IF-3, IF-1 and N-formylmethionyl-tRNA(fMet); mRNA recruitment can occur at any time during PIC assembly.

The protein resides in the cytoplasm. Its function is as follows. One of the essential components for the initiation of protein synthesis. Stabilizes the binding of IF-2 and IF-3 on the 30S subunit to which N-formylmethionyl-tRNA(fMet) subsequently binds. Helps modulate mRNA selection, yielding the 30S pre-initiation complex (PIC). Upon addition of the 50S ribosomal subunit IF-1, IF-2 and IF-3 are released leaving the mature 70S translation initiation complex. The sequence is that of Translation initiation factor IF-1 from Clostridium acetobutylicum (strain ATCC 824 / DSM 792 / JCM 1419 / IAM 19013 / LMG 5710 / NBRC 13948 / NRRL B-527 / VKM B-1787 / 2291 / W).